The primary structure comprises 1850 residues: Serine/threonine-protein kinase WNK (1850 aa).

Disordered regions lie at residues 1–108 (MPDS…NALE), 221–253 (QHSI…NNDK), and 272–309 (MVND…EKAA). Low complexity-rich tracts occupy residues 16-26 (SSVSSTTASTT) and 234-251 (PPNT…AANN). Over residues 284–309 (DMDKMVSEEERARKEQEKREEEEKAA) the composition is skewed to basic and acidic residues. Residues 334-596 (LKFDEELGRG…VKQLLVDDFF (263 aa)) form the Protein kinase domain. ATP-binding positions include serine 344, 416-419 (TELM), and lysine 466. Aspartate 483 (proton acceptor) is an active-site residue. Residues 693-749 (DHRLLEIKRAKEEEERIREEAEIKEELRLRAEAKEKEKERLEKERLEKKAAAAAAAN) are a coiled coil. The segment covering 727-742 (EKEKERLEKERLEKKA) has biased composition (basic and acidic residues). 7 disordered regions span residues 727–790 (EKEK…AQQP), 890–943 (TPAS…KRKS), 1040–1130 (EPPT…AAKP), 1188–1249 (SPVS…TPAI), 1588–1636 (GTHI…PSHS), 1721–1740 (ASLS…DNEG), and 1769–1850 (IIPS…IENV). Pro residues predominate over residues 751 to 760 (NPTPIPPTPA). The segment covering 776-790 (STQTSAEIQQSAQQP) has biased composition (polar residues). The span at 890–934 (TPASIASPSPAPSATDVASTTAPVTPAPTPTTTTDGGAAAASTTT) shows a compositional bias: low complexity. Residues 1062–1071 (PKIEIEKTPP) show a composition bias toward basic and acidic residues. The segment covering 1077–1101 (QEPNNVQVTNVRKVSQESNAESVQS) has biased composition (polar residues). Low complexity predominate over residues 1188 to 1207 (SPVSHSLSSNSSPSATTHSN). A compositionally biased stretch (polar residues) spans 1208–1217 (MSSIQSTTSV). Residues 1771–1805 (PSSRQSVRSATSSSPSTPPSSSSAPPKSLSSPTKS) show a composition bias toward low complexity. Over residues 1806-1820 (YVSHCSLSIGYGSTA) the composition is skewed to polar residues. Residues 1821–1832 (SSEQQQREPSPS) are compositionally biased toward low complexity.

This sequence belongs to the protein kinase superfamily. Ser/Thr protein kinase family. WNK subfamily. Interacts with gck-3 (via C-terminus). It depends on Mg(2+) as a cofactor. Expressed in pharynx, nervous system, hypodermis, spermatheca, excretory cell and canal and body wall muscles.

The protein localises to the cytoplasm. It carries out the reaction L-seryl-[protein] + ATP = O-phospho-L-seryl-[protein] + ADP + H(+). The catalysed reaction is L-threonyl-[protein] + ATP = O-phospho-L-threonyl-[protein] + ADP + H(+). Its activity is regulated as follows. Activated in response to hyperosmotic stress: cell shrinkage promotes formation of a membraneless compartment that concentrates wnk-1 with its downstrem substrates. In terms of biological role, serine/threonine-protein kinase component of the WNK3-SPAK/OSR1 kinase cascade, which plays an important role in the regulation of electrolyte homeostasis and regulatory volume increase in response to hyperosmotic stress. Wnk-1 mediates regulatory volume increase in response to hyperosmotic stress by acting as a molecular crowding sensor, which senses cell shrinkage and mediates formation of a membraneless compartment by undergoing liquid-liquid phase separation. The membraneless compartment concentrates wnk-1 with its substrates. Phosphorylates gck-3. Plays a role in osmotic stress responses during which it increases gpdh-1 translation, likely by phosphorylating gck-3. Essential for larval development and the tubular formation of the excretory canals. The sequence is that of Serine/threonine-protein kinase WNK from Caenorhabditis elegans.